Here is a 555-residue protein sequence, read N- to C-terminus: Glutamine--tRNA ligase (555 aa).

The 'HIGH' region motif lies at 35 to 45 (PEPNGYLHIGH). ATP is bound by residues 36-38 (EPN) and 42-48 (HIGHAKS). L-glutamine contacts are provided by Asp-68 and Tyr-213. ATP is bound by residues Thr-232 and 262 to 263 (RL). Positions 269–273 (ITSKR) match the 'KMSKS' region motif.

Belongs to the class-I aminoacyl-tRNA synthetase family. In terms of assembly, monomer.

It localises to the cytoplasm. The enzyme catalyses tRNA(Gln) + L-glutamine + ATP = L-glutaminyl-tRNA(Gln) + AMP + diphosphate. The sequence is that of Glutamine--tRNA ligase from Azotobacter vinelandii (strain DJ / ATCC BAA-1303).